The primary structure comprises 980 residues: Macrophage colony-stimulating factor 1 receptor (980 aa).

A signal peptide spans 1–19; that stretch reads MGPRALLVLLVATAWHAQG. Topologically, residues 20 to 514 are extracellular; sequence VPVIQPSGPE…QLPDELLFTP (495 aa). Ig-like C2-type domains are found at residues 21 to 100, 107 to 197, 202 to 297, 299 to 397, and 400 to 499; these read PVIQ…IHLY, PWKV…KVQK, PATL…RVVE, AYLN…LTLR, and PEVR…WPIS. Cys42 and Cys84 are joined by a disulfide. 11 N-linked (GlcNAc...) asparagine glycosylation sites follow: Asn45, Asn73, Asn94, Asn153, Asn275, Asn286, Asn302, Asn335, Asn410, Asn477, and Asn490. Cystine bridges form between Cys127-Cys177 and Cys224-Cys278. A disulfide bridge links Cys417 with Cys482. Residues 515-535 form a helical membrane-spanning segment; sequence VLLTCMSIMALLLLLLLLLLY. Over 536–980 the chain is Cytoplasmic; that stretch reads KYKQKPKYQV…LLQPNNYQFC (445 aa). The segment at 539–571 is regulatory juxtamembrane domain; the sequence is QKPKYQVRWKIIESYEGNSYTFIDPTQLPYNEK. 2 positions are modified to phosphotyrosine; by autocatalysis: Tyr543 and Tyr558. A Protein kinase domain is found at 579-908; the sequence is LQFGKTLGAG…PTFQQICSLL (330 aa). ATP is bound by residues 585–593 and Lys613; that span reads LGAGAFGKV. Phosphotyrosine; by autocatalysis occurs at positions 696 and 705. Phosphoserine is present on Ser710. Phosphotyrosine; by autocatalysis is present on Tyr720. Residues 723–743 form a disordered region; that stretch reads MRPVSTSSSNDSFSEEDLGKE. Asp776 acts as the Proton acceptor in catalysis. Positions 794 to 816 are activation loop; the sequence is DFGLARDIMNDSNYIVKGNARLP. Residues Tyr807 and Tyr921 each carry the phosphotyrosine; by autocatalysis modification. The interval 918–959 is disordered; the sequence is VPNYTNLPSSSSSSSSSSSSCRTGSGGGSSSEPEEESSSEHL. Residues 926-940 are compositionally biased toward low complexity; the sequence is SSSSSSSSSSSSCRT. Tyr977 bears the Phosphotyrosine; by autocatalysis mark.

Belongs to the protein kinase superfamily. Tyr protein kinase family. CSF-1/PDGF receptor subfamily. As to quaternary structure, monomer. Homodimer. Interacts with CSF1 and IL34. Interaction with dimeric CSF1 or IL34 leads to receptor homodimerization. Interacts with INPPL1/SHIP2 and THOC5. Interacts (tyrosine phosphorylated) with PLCG2 (via SH2 domain). Interacts (tyrosine phosphorylated) with PIK3R1 (via SH2 domain). Interacts (tyrosine phosphorylated) with FYN, YES1 and SRC (via SH2 domain). Interacts (tyrosine phosphorylated) with CBL, GRB2 and SLA2. Autophosphorylated in response to CSF1 or IL34 binding. Phosphorylation at Tyr-558 is important for normal down-regulation of signaling by ubiquitination, internalization and degradation. Phosphorylation at Tyr-558 and Tyr-807 is important for interaction with SRC family members, including FYN, YES1 and SRC, and for subsequent activation of these protein kinases. Phosphorylation at Tyr-696 and Tyr-921 is important for interaction with GRB2. Phosphorylation at Tyr-720 is important for interaction with PIK3R1. Phosphorylation at Tyr-720 and Tyr-807 is important for interaction with PLCG2. Phosphorylation at Tyr-977 is important for interaction with CBL. Dephosphorylation by PTPN2 negatively regulates downstream signaling and macrophage differentiation. In terms of processing, ubiquitinated. Becomes rapidly polyubiquitinated after autophosphorylation, leading to its degradation.

The protein resides in the cell membrane. It carries out the reaction L-tyrosyl-[protein] + ATP = O-phospho-L-tyrosyl-[protein] + ADP + H(+). Present in an inactive conformation in the absence of bound ligand. CSF1 or IL34 binding leads to dimerization and activation by autophosphorylation on tyrosine residues. Tyrosine-protein kinase that acts as a cell-surface receptor for CSF1 and IL34 and plays an essential role in the regulation of survival, proliferation and differentiation of hematopoietic precursor cells, especially mononuclear phagocytes, such as macrophages and monocytes. Promotes the release of pro-inflammatory chemokines in response to IL34 and CSF1, and thereby plays an important role in innate immunity and in inflammatory processes. Plays an important role in the regulation of osteoclast proliferation and differentiation, the regulation of bone resorption, and is required for normal bone and tooth development. Required for normal male and female fertility, and for normal development of milk ducts and acinar structures in the mammary gland during pregnancy. Promotes reorganization of the actin cytoskeleton, regulates formation of membrane ruffles, cell adhesion and cell migration, and promotes cancer cell invasion. Activates several signaling pathways in response to ligand binding, including the ERK1/2 and the JNK pathway. Phosphorylates PIK3R1, PLCG2, GRB2, SLA2 and CBL. Activation of PLCG2 leads to the production of the cellular signaling molecules diacylglycerol and inositol 1,4,5-trisphosphate, that then lead to the activation of protein kinase C family members, especially PRKCD. Phosphorylation of PIK3R1, the regulatory subunit of phosphatidylinositol 3-kinase, leads to activation of the AKT1 signaling pathway. Activated CSF1R also mediates activation of the MAP kinases MAPK1/ERK2 and/or MAPK3/ERK1, and of the SRC family kinases SRC, FYN and YES1. Activated CSF1R transmits signals both via proteins that directly interact with phosphorylated tyrosine residues in its intracellular domain, or via adapter proteins, such as GRB2. Promotes activation of STAT family members STAT3, STAT5A and/or STAT5B. Promotes tyrosine phosphorylation of SHC1 and INPP5D/SHIP-1. Receptor signaling is down-regulated by protein phosphatases, such as INPP5D/SHIP-1, that dephosphorylate the receptor and its downstream effectors, and by rapid internalization of the activated receptor. In the central nervous system, may play a role in the development of microglia macrophages. The chain is Macrophage colony-stimulating factor 1 receptor (CSF1R) from Felis catus (Cat).